The sequence spans 486 residues: Arginine deiminase (486 aa).

The active-site Amidino-cysteine intermediate is the Cys476.

Belongs to the arginine deiminase family.

It is found in the cytoplasm. The catalysed reaction is L-arginine + H2O = L-citrulline + NH4(+). Its pathway is amino-acid degradation; L-arginine degradation via ADI pathway; carbamoyl phosphate from L-arginine: step 1/2. Involved in the arginine deiminase pathway of fermentative arginine utilization. This is Arginine deiminase (arcA) from Halobacterium salinarum (strain ATCC 29341 / DSM 671 / R1).